The following is a 291-amino-acid chain: 4-diphosphocytidyl-2-C-methyl-D-erythritol kinase (291 aa).

The active site involves K11. 95-105 (PVAAGLAGGSS) contacts ATP. D137 is a catalytic residue.

Belongs to the GHMP kinase family. IspE subfamily.

The catalysed reaction is 4-CDP-2-C-methyl-D-erythritol + ATP = 4-CDP-2-C-methyl-D-erythritol 2-phosphate + ADP + H(+). The protein operates within isoprenoid biosynthesis; isopentenyl diphosphate biosynthesis via DXP pathway; isopentenyl diphosphate from 1-deoxy-D-xylulose 5-phosphate: step 3/6. Functionally, catalyzes the phosphorylation of the position 2 hydroxy group of 4-diphosphocytidyl-2C-methyl-D-erythritol. This chain is 4-diphosphocytidyl-2-C-methyl-D-erythritol kinase, found in Alkaliphilus metalliredigens (strain QYMF).